A 307-amino-acid chain; its full sequence is Fructose-bisphosphate aldolase (307 aa).

Residue S49 coordinates D-glyceraldehyde 3-phosphate. The active-site Proton donor is the D82. Zn(2+) contacts are provided by H83, D104, E134, and H180. G181 contacts dihydroxyacetone phosphate. Zn(2+) is bound at residue H210. Dihydroxyacetone phosphate is bound by residues 211–213 (GAS) and 253–256 (NTDT).

It belongs to the class II fructose-bisphosphate aldolase family. As to quaternary structure, homodimer. Zn(2+) serves as cofactor.

The catalysed reaction is beta-D-fructose 1,6-bisphosphate = D-glyceraldehyde 3-phosphate + dihydroxyacetone phosphate. It functions in the pathway carbohydrate degradation; glycolysis; D-glyceraldehyde 3-phosphate and glycerone phosphate from D-glucose: step 4/4. Functionally, catalyzes the aldol condensation of dihydroxyacetone phosphate (DHAP or glycerone-phosphate) with glyceraldehyde 3-phosphate (G3P) to form fructose 1,6-bisphosphate (FBP) in gluconeogenesis and the reverse reaction in glycolysis. The sequence is that of Fructose-bisphosphate aldolase (fba) from Helicobacter pylori (strain J99 / ATCC 700824) (Campylobacter pylori J99).